We begin with the raw amino-acid sequence, 253 residues long: Chloride intracellular channel protein 4 (253 aa).

Ala2 carries the post-translational modification N-acetylalanine. The segment at 2–101 (ALSMPLNGLK…EEFLEEVLCP (100 aa)) is required for insertion into the membrane. Ser4 carries the phosphoserine modification. At Lys24 the chain carries N6-acetyllysine. The G-site motif lies at 35–38 (CPFS). Residues 37 to 57 (FSQRLFMILWLKGVVFSVTTV) form a helical membrane-spanning segment. The GST C-terminal domain occupies 81-244 (NSEVKTDVNK…PSDKEVEIAY (164 aa)). An N6-acetyllysine modification is found at Lys130. Residues Ser132, Ser167, and Ser236 each carry the phosphoserine modification. Position 244 is a phosphotyrosine (Tyr244).

Belongs to the chloride channel CLIC family. In terms of assembly, monomer. Interacts with HRH30. Interacts with AKAP9. As to expression, detected in blood vessels in the retina (at protein level). Expressed to the greatest extent in vivo in heart, lung, liver, kidney, and skin.

The protein localises to the cytoplasm. It localises to the cytoskeleton. Its subcellular location is the microtubule organizing center. The protein resides in the centrosome. It is found in the cytoplasmic vesicle membrane. The protein localises to the nucleus. It localises to the cell membrane. Its subcellular location is the mitochondrion. The protein resides in the cell junction. The catalysed reaction is chloride(in) = chloride(out). It carries out the reaction thiocyanate(in) = thiocyanate(out). The enzyme catalyses nitrate(in) = nitrate(out). It catalyses the reaction iodide(out) = iodide(in). The catalysed reaction is bromide(in) = bromide(out). It carries out the reaction fluoride(in) = fluoride(out). The enzyme catalyses choline(out) = choline(in). Its function is as follows. In the soluble state, catalyzes glutaredoxin-like thiol disulfide exchange reactions with reduced glutathione as electron donor. Can insert into membranes and form voltage-dependent multi-ion conductive channels. Membrane insertion seems to be redox-regulated and may occur only under oxidizing conditions. Has alternate cellular functions like a potential role in angiogenesis or in maintaining apical-basolateral membrane polarity during mitosis and cytokinesis. Could also promote endothelial cell proliferation and regulate endothelial morphogenesis (tubulogenesis). Promotes cell-surface expression of HRH3. The sequence is that of Chloride intracellular channel protein 4 (Clic4) from Mus musculus (Mouse).